We begin with the raw amino-acid sequence, 628 residues long: Leucine-rich repeat and fibronectin type-III domain-containing protein 3 (628 aa).

A signal peptide spans 1 to 16 (MAILPLLLCLLPLAPA). At 17–539 (SSPPQSATPS…PHAPFLGGTM (523 aa)) the chain is on the extracellular side. Residues 19 to 59 (PPQSATPSPCPRRCRCQTQSLPLSVLCPGAGLLFVPPSLDR) form the LRRNT domain. LRR repeat units follow at residues 60–83 (RAAE…ANMT), 84–105 (GLLH…AFAD), 108–129 (ALRA…QLRG), 132–153 (NLRH…ALDD), 157–178 (TLED…ALGR), 181–202 (NVNT…AFSR), and 205–226 (KLAR…PLFS). Asparagine 81 carries an N-linked (GlcNAc...) asparagine glycan. The 47-residue stretch at 249–295 (NPLHCNCELVWLRRLAREDDLEACASPPALGGRYFWAVGEEEFVCEP) folds into the LRRCT domain. Residues 295 to 382 (PPVVTHRSPP…GEATAAVELT (88 aa)) enclose the Ig-like domain. A disulfide bridge connects residues cysteine 317 and cysteine 366. N-linked (GlcNAc...) asparagine glycosylation is found at asparagine 339, asparagine 348, and asparagine 393. The interval 382–430 (TVGPPPPPQLANSTSCDPPRDGDPDALTPPSAASASAKVADTGPPTDRG) is disordered. Residues 406–422 (DALTPPSAASASAKVAD) are compositionally biased toward low complexity. In terms of domain architecture, Fibronectin type-III spans 425–523 (PPTDRGVQVT…GCARFSTEPA (99 aa)). N-linked (GlcNAc...) asparagine glycosylation is present at asparagine 462. A helical membrane pass occupies residues 540-560 (IIALGGVIVASVLVFIFVLLM). Topologically, residues 561-628 (RYKVHGGQPP…WGPGHEPVGP (68 aa)) are cytoplasmic.

The protein belongs to the LRFN family. In terms of assembly, can form heteromeric complexes with LRFN1, LRFN2, LRFN4 and LRFN5. Able to form homomeric complexes across cell junctions, between adjacent cells. Does not interact with DLG4. Post-translationally, N-glycosylated.

It is found in the cell membrane. The protein localises to the cell projection. Its subcellular location is the axon. It localises to the dendrite. The protein resides in the synapse. It is found in the presynaptic cell membrane. The protein localises to the postsynaptic cell membrane. Its function is as follows. Cell adhesion molecule that mediates homophilic cell-cell adhesion in a Ca(2+)-independent manner. Promotes neurite outgrowth in hippocampal neurons. This is Leucine-rich repeat and fibronectin type-III domain-containing protein 3 (LRFN3) from Homo sapiens (Human).